A 397-amino-acid polypeptide reads, in one-letter code: Proteasome-activating nucleotidase (397 aa).

The stretch at 15 to 58 (DYVTFLKRRIRQLELQVRTLEADKERLERELSRLRMEMSRLRQP) forms a coiled coil. Residues 182 to 187 (GCGKTL) and H321 each bind ATP. The interval 395 to 397 (MYG) is docks into pockets in the proteasome alpha-ring to cause gate opening.

The protein belongs to the AAA ATPase family. In terms of assembly, homohexamer. The hexameric complex has a two-ring architecture resembling a top hat that caps the 20S proteasome core at one or both ends. Upon ATP-binding, the C-terminus of PAN interacts with the alpha-rings of the proteasome core by binding to the intersubunit pockets.

It localises to the cytoplasm. ATPase which is responsible for recognizing, binding, unfolding and translocation of substrate proteins into the archaeal 20S proteasome core particle. Is essential for opening the gate of the 20S proteasome via an interaction with its C-terminus, thereby allowing substrate entry and access to the site of proteolysis. Thus, the C-termini of the proteasomal ATPase function like a 'key in a lock' to induce gate opening and therefore regulate proteolysis. Unfolding activity requires energy from ATP hydrolysis, whereas ATP binding alone promotes ATPase-20S proteasome association which triggers gate opening, and supports translocation of unfolded substrates. In Thermococcus kodakarensis (strain ATCC BAA-918 / JCM 12380 / KOD1) (Pyrococcus kodakaraensis (strain KOD1)), this protein is Proteasome-activating nucleotidase.